We begin with the raw amino-acid sequence, 499 residues long: Probable cytosol aminopeptidase (499 aa).

Positions 269 and 274 each coordinate Mn(2+). Lys-281 is an active-site residue. Residues Asp-292, Asp-351, and Glu-353 each contribute to the Mn(2+) site. Arg-355 is an active-site residue.

This sequence belongs to the peptidase M17 family. Mn(2+) is required as a cofactor.

Its subcellular location is the cytoplasm. It carries out the reaction Release of an N-terminal amino acid, Xaa-|-Yaa-, in which Xaa is preferably Leu, but may be other amino acids including Pro although not Arg or Lys, and Yaa may be Pro. Amino acid amides and methyl esters are also readily hydrolyzed, but rates on arylamides are exceedingly low.. The enzyme catalyses Release of an N-terminal amino acid, preferentially leucine, but not glutamic or aspartic acids.. Functionally, presumably involved in the processing and regular turnover of intracellular proteins. Catalyzes the removal of unsubstituted N-terminal amino acids from various peptides. This Actinobacillus pleuropneumoniae serotype 3 (strain JL03) protein is Probable cytosol aminopeptidase.